A 561-amino-acid chain; its full sequence is Putative transport protein KPK_3686 (561 aa).

5 helical membrane passes run 8–28 (LLNG…LCLG), 37–57 (LGNS…HFAI), 66–86 (FMLF…SIFF), 94–114 (MLAL…GKVF), and 158–178 (HLSL…IVGA). RCK C-terminal domains are found at residues 202-288 (LDTD…SFRN) and 292-373 (VFDR…RIGF). 5 helical membrane-spanning segments follow: residues 383–403 (LLAF…TFQF), 406–426 (FSFG…LGFL), 447–467 (FGLM…INNG), 478–498 (AGLI…AYVL), and 540–560 (AIAN…WPGL).

It belongs to the AAE transporter (TC 2.A.81) family. YbjL subfamily.

Its subcellular location is the cell membrane. This chain is Putative transport protein KPK_3686, found in Klebsiella pneumoniae (strain 342).